The chain runs to 467 residues: Glycogen synthase kinase-3 (467 aa).

The span at 1-20 (MSSKDQILEKDKKETDDNGN) shows a compositional bias: basic and acidic residues. A disordered region spans residues 1–42 (MSSKDQILEKDKKETDDNGNKKTTTTTSSSSSSSSSSKPRSN). Residues 23–37 (TTTTTSSSSSSSSSS) show a composition bias toward low complexity. The region spanning 56 to 339 (YITEGVIGNG…PVEICAHPFF (284 aa)) is the Protein kinase domain. ATP contacts are provided by residues 62–70 (IGNGSFGVV) and K85. D179 acts as the Proton acceptor in catalysis. Phosphotyrosine; by zakA occurs at positions 214 and 220. The disordered stretch occupies residues 400-467 (SSNQSSSSNS…TTTTTTTSNH (68 aa)).

Belongs to the protein kinase superfamily. CMGC Ser/Thr protein kinase family. GSK-3 subfamily. The cofactor is Mg(2+).

The enzyme catalyses L-seryl-[tau protein] + ATP = O-phospho-L-seryl-[tau protein] + ADP + H(+). The catalysed reaction is L-threonyl-[tau protein] + ATP = O-phospho-L-threonyl-[tau protein] + ADP + H(+). Its activity is regulated as follows. Inhibited by lithium. Lithium inhibition is competitive with respect to magnesium but non-competitive with respect to the peptide substrate. Functionally, during cellular differentiation, may mediate an extracellular cyclic AMP stimulated signal transduction pathway that regulates prespore and prestalk B-cell proportions through inhibition of stalk cell formation and induction of prespore cell differentiation. The cAMP receptor carC appears to activate gskA via the tyrosine kinases zakA and zak2, to stimulate prespore differentiation, while carD appears to negatively regulate gskA, to promote prestalk formation. The protein is Glycogen synthase kinase-3 (gskA) of Dictyostelium discoideum (Social amoeba).